The chain runs to 1025 residues: Leucyl-cystinyl aminopeptidase (1025 aa).

N-acetylmethionine is present on Met-1. Residues 1-110 (MEPFTNDRLQ…GACSVPSART (110 aa)) lie on the Cytoplasmic side of the membrane. The short motif at 53-54 (LL) is the Dileucine internalization motif element. Phosphotyrosine is present on Tyr-70. Residues 76–77 (LL) carry the Dileucine internalization motif motif. Ser-80 and Ser-91 each carry phosphoserine. The interval 96–101 (RQSPDG) is tankyrase binding. A helical; Signal-anchor for type II membrane protein transmembrane segment spans residues 111 to 131 (MVVCAFVIVVAVSVIMVIYLL). Over 132-1025 (PRCTFTKEGC…KNLKSLTWWL (894 aa)) the chain is Extracellular. N-linked (GlcNAc...) asparagine glycosylation is found at Asn-145, Asn-184, Asn-215, Asn-256, and Asn-266. Glu-295 is a substrate binding site. N-linked (GlcNAc...) asparagine glycosylation is found at Asn-368 and Asn-374. 428 to 432 (GAMEN) is a substrate binding site. Asn-448 carries an N-linked (GlcNAc...) asparagine glycan. His-464 contributes to the Zn(2+) binding site. Residue Glu-465 is the Proton acceptor of the active site. His-468 and Glu-487 together coordinate Zn(2+). Asn-525, Asn-578, Asn-598, Asn-664, Asn-682, Asn-760, Asn-834, Asn-850, and Asn-989 each carry an N-linked (GlcNAc...) asparagine glycan.

Belongs to the peptidase M1 family. Homodimer. Binds tankyrases 1 and 2. Requires Zn(2+) as cofactor. Post-translationally, the pregnancy serum form is derived from the membrane-bound form by proteolytic processing. N-glycosylated. Highly expressed in placenta, heart, kidney and small intestine. Detected at lower levels in neuronal cells in the brain, in skeletal muscle, spleen, liver, testes and colon.

It localises to the cell membrane. It is found in the secreted. It carries out the reaction Release of an N-terminal amino acid, Cys-|-Xaa-, in which the half-cystine residue is involved in a disulfide loop, notably in oxytocin or vasopressin. Hydrolysis rates on a range of aminoacyl arylamides exceed that for the cystinyl derivative, however.. Its function is as follows. Release of an N-terminal amino acid, cleaves before cysteine, leucine as well as other amino acids. Degrades peptide hormones such as oxytocin, vasopressin and angiotensin III, and plays a role in maintaining homeostasis during pregnancy. May be involved in the inactivation of neuronal peptides in the brain. Cleaves Met-enkephalin and dynorphin. Binds angiotensin IV and may be the angiotensin IV receptor in the brain. This chain is Leucyl-cystinyl aminopeptidase (LNPEP), found in Homo sapiens (Human).